An 892-amino-acid chain; its full sequence is Transmembrane channel-like protein 2-B (892 aa).

Positions 29–125 are disordered; the sequence is GINQNLRREE…DESMSEGEMA (97 aa). Composition is skewed to basic residues over residues 48 to 58 and 66 to 77; these read RRAKKRRMNRR and RSKKMRMRVRKN. Low complexity predominate over residues 103–112; that stretch reads PSSCSSSSDN. The next 9 membrane-spanning stretches (helical) occupy residues 235–255, 275–295, 308–328, 403–423, 444–464, 482–502, 616–636, 671–691, and 736–756; these read LVLFGFMFGLVVIPELLMGIP, FSVLFEFGGYCKYSILFYGFY, LPLSYLLVGVGIFGYSLMVVI, LANVLILCCLAGSGYLIYAVV, EVEIVMSLLGLVCPPLFEAIA, IFALFLGNLYTFLFALFDEVN, LIFNQGMIWMGAFYAPGLVGI, FYMGLLLLVLFLSLMPVIYSI, and GLIISVVLLMVWLAIYYLNAV. The segment covering 772-785 has biased composition (basic and acidic residues); that stretch reads QMQRDEEKNRRNNK. Disordered regions lie at residues 772–791 and 796–892; these read QMQRDEEKNRRNNKDSTNQV and EDLL…PPRR. The segment covering 862-878 has biased composition (pro residues); the sequence is PRQPGPLPGNPRGPPPG.

This sequence belongs to the TMC family. In adults, expression is restricted to the hair cells of inner ear and lateral line organ. Expressed at higher levels in the larval lateral-line neuromasts than in the larval inner ear.

The protein localises to the membrane. Probable component of the mechanotransducer (MET) non-selective cation channel. The chain is Transmembrane channel-like protein 2-B from Danio rerio (Zebrafish).